The following is a 341-amino-acid chain: Glycerol-3-phosphate dehydrogenase [NAD(P)+] (341 aa).

NADPH-binding residues include serine 15, tryptophan 16, arginine 36, and lysine 110. Sn-glycerol 3-phosphate contacts are provided by lysine 110, glycine 139, and serine 141. NADPH is bound at residue alanine 143. Sn-glycerol 3-phosphate is bound by residues lysine 194, aspartate 247, serine 257, arginine 258, and asparagine 259. The active-site Proton acceptor is lysine 194. Arginine 258 provides a ligand contact to NADPH. Residues valine 282 and glutamate 284 each contribute to the NADPH site.

This sequence belongs to the NAD-dependent glycerol-3-phosphate dehydrogenase family.

It is found in the cytoplasm. The catalysed reaction is sn-glycerol 3-phosphate + NAD(+) = dihydroxyacetone phosphate + NADH + H(+). It carries out the reaction sn-glycerol 3-phosphate + NADP(+) = dihydroxyacetone phosphate + NADPH + H(+). It participates in membrane lipid metabolism; glycerophospholipid metabolism. Functionally, catalyzes the reduction of the glycolytic intermediate dihydroxyacetone phosphate (DHAP) to sn-glycerol 3-phosphate (G3P), the key precursor for phospholipid synthesis. This chain is Glycerol-3-phosphate dehydrogenase [NAD(P)+], found in Xanthomonas campestris pv. campestris (strain 8004).